The following is a 531-amino-acid chain: CTP synthase (531 aa).

Residues 1–264 (MPKFVVVTGG…GDFLVERLRL (264 aa)) are amidoligase domain. A CTP-binding site is contributed by S13. A UTP-binding site is contributed by S13. Position 14–19 (14–19 (GLGKGV)) interacts with ATP. L-glutamine is bound at residue Y54. Position 71 (D71) interacts with ATP. Residues D71 and E139 each coordinate Mg(2+). CTP-binding positions include 146-148 (DYE), 185-190 (KTKPLQ), and K221. UTP is bound by residues 185-190 (KTKPLQ) and K221. Residues 293–531 (CGKYVELPDA…LSAAVEQSRR (239 aa)) form the Glutamine amidotransferase type-1 domain. G351 lines the L-glutamine pocket. The active-site Nucleophile; for glutamine hydrolysis is the C378. Residues 379-382 (FGMQ), E402, and R459 contribute to the L-glutamine site. Active-site residues include H504 and E506.

It belongs to the CTP synthase family. As to quaternary structure, homotetramer.

It carries out the reaction UTP + L-glutamine + ATP + H2O = CTP + L-glutamate + ADP + phosphate + 2 H(+). The catalysed reaction is L-glutamine + H2O = L-glutamate + NH4(+). It catalyses the reaction UTP + NH4(+) + ATP = CTP + ADP + phosphate + 2 H(+). Its pathway is pyrimidine metabolism; CTP biosynthesis via de novo pathway; CTP from UDP: step 2/2. Its activity is regulated as follows. Allosterically activated by GTP, when glutamine is the substrate; GTP has no effect on the reaction when ammonia is the substrate. The allosteric effector GTP functions by stabilizing the protein conformation that binds the tetrahedral intermediate(s) formed during glutamine hydrolysis. Inhibited by the product CTP, via allosteric rather than competitive inhibition. Functionally, catalyzes the ATP-dependent amination of UTP to CTP with either L-glutamine or ammonia as the source of nitrogen. Regulates intracellular CTP levels through interactions with the four ribonucleotide triphosphates. The polypeptide is CTP synthase (Pyrobaculum calidifontis (strain DSM 21063 / JCM 11548 / VA1)).